A 187-amino-acid polypeptide reads, in one-letter code: Putative manganese efflux pump MntP (187 aa).

The next 6 membrane-spanning stretches (helical) occupy residues M3 to G23, L41 to A61, S62 to G82, L107 to L129, A143 to G163, and A166 to L186.

Belongs to the MntP (TC 9.B.29) family.

It localises to the cell inner membrane. Its function is as follows. Probably functions as a manganese efflux pump. This is Putative manganese efflux pump MntP from Pectobacterium atrosepticum (strain SCRI 1043 / ATCC BAA-672) (Erwinia carotovora subsp. atroseptica).